We begin with the raw amino-acid sequence, 207 residues long: Thiamine-phosphate synthase (207 aa).

4-amino-2-methyl-5-(diphosphooxymethyl)pyrimidine contacts are provided by residues 38 to 42 (QYRNK) and Asn70. Positions 71 and 90 each coordinate Mg(2+). Residue Ser109 coordinates 4-amino-2-methyl-5-(diphosphooxymethyl)pyrimidine. A 2-[(2R,5Z)-2-carboxy-4-methylthiazol-5(2H)-ylidene]ethyl phosphate-binding site is contributed by 136–138 (TAT). 4-amino-2-methyl-5-(diphosphooxymethyl)pyrimidine is bound at residue Lys139. 2-[(2R,5Z)-2-carboxy-4-methylthiazol-5(2H)-ylidene]ethyl phosphate is bound by residues Gly165 and 185–186 (VS).

Belongs to the thiamine-phosphate synthase family. The cofactor is Mg(2+).

The catalysed reaction is 2-[(2R,5Z)-2-carboxy-4-methylthiazol-5(2H)-ylidene]ethyl phosphate + 4-amino-2-methyl-5-(diphosphooxymethyl)pyrimidine + 2 H(+) = thiamine phosphate + CO2 + diphosphate. It catalyses the reaction 2-(2-carboxy-4-methylthiazol-5-yl)ethyl phosphate + 4-amino-2-methyl-5-(diphosphooxymethyl)pyrimidine + 2 H(+) = thiamine phosphate + CO2 + diphosphate. The enzyme catalyses 4-methyl-5-(2-phosphooxyethyl)-thiazole + 4-amino-2-methyl-5-(diphosphooxymethyl)pyrimidine + H(+) = thiamine phosphate + diphosphate. The protein operates within cofactor biosynthesis; thiamine diphosphate biosynthesis; thiamine phosphate from 4-amino-2-methyl-5-diphosphomethylpyrimidine and 4-methyl-5-(2-phosphoethyl)-thiazole: step 1/1. Its function is as follows. Condenses 4-methyl-5-(beta-hydroxyethyl)thiazole monophosphate (THZ-P) and 2-methyl-4-amino-5-hydroxymethyl pyrimidine pyrophosphate (HMP-PP) to form thiamine monophosphate (TMP). This is Thiamine-phosphate synthase from Xanthomonas campestris pv. campestris (strain 8004).